Reading from the N-terminus, the 144-residue chain is Large ribosomal subunit protein uL13 (144 aa).

Belongs to the universal ribosomal protein uL13 family. In terms of assembly, part of the 50S ribosomal subunit.

This protein is one of the early assembly proteins of the 50S ribosomal subunit, although it is not seen to bind rRNA by itself. It is important during the early stages of 50S assembly. The sequence is that of Large ribosomal subunit protein uL13 from Mesomycoplasma hyopneumoniae (strain 7448) (Mycoplasma hyopneumoniae).